The chain runs to 146 residues: Ribonuclease H (146 aa).

One can recognise an RNase H type-1 domain in the interval 1 to 143 (MEKKVTIYTD…CDELARLAVR (143 aa)). Mg(2+) is bound by residues D10, E48, D70, and D135.

It belongs to the RNase H family. In terms of assembly, monomer. Mg(2+) is required as a cofactor.

Its subcellular location is the cytoplasm. It carries out the reaction Endonucleolytic cleavage to 5'-phosphomonoester.. Functionally, endonuclease that specifically degrades the RNA of RNA-DNA hybrids. The protein is Ribonuclease H of Chlorobium phaeovibrioides (strain DSM 265 / 1930) (Prosthecochloris vibrioformis (strain DSM 265)).